The sequence spans 382 residues: tRNA-specific 2-thiouridylase MnmA (382 aa).

Residues 34–41 (AMSGGVDS) and Leu60 each bind ATP. Cys128 acts as the Nucleophile in catalysis. Cys128 and Cys224 form a disulfide bridge. ATP is bound at residue Gly152. Residues 174-176 (RDQ) form an interaction with tRNA region. Cys224 functions as the Cysteine persulfide intermediate in the catalytic mechanism.

This sequence belongs to the MnmA/TRMU family.

It localises to the cytoplasm. It carries out the reaction S-sulfanyl-L-cysteinyl-[protein] + uridine(34) in tRNA + AH2 + ATP = 2-thiouridine(34) in tRNA + L-cysteinyl-[protein] + A + AMP + diphosphate + H(+). Its function is as follows. Catalyzes the 2-thiolation of uridine at the wobble position (U34) of tRNA, leading to the formation of s(2)U34. In Sphingopyxis alaskensis (strain DSM 13593 / LMG 18877 / RB2256) (Sphingomonas alaskensis), this protein is tRNA-specific 2-thiouridylase MnmA.